Consider the following 388-residue polypeptide: Homeobox protein XHOX-3 (388 aa).

2 disordered regions span residues 30 to 109 (AVGS…SDFY) and 131 to 163 (SAGQCSEPMGGSPVNGSDSSKGGGGSHGSFSAC). Polar residues-rich tracts occupy residues 68–81 (ATGQQRSRSPQLRI) and 91–103 (DSLSTKGQHSSSD). The segment at residues 168-227 (MRRYRTAFTREQIARLEKEFYRENYVSRPRRCELAAALNLPETTIKVWFQNRRMKDKRQR) is a DNA-binding region (homeobox).

The protein belongs to the even-skipped homeobox family.

The protein resides in the nucleus. In terms of biological role, may be required for posterior development and development of normal embryonic axial pattern. This chain is Homeobox protein XHOX-3 (xhox3), found in Xenopus laevis (African clawed frog).